Reading from the N-terminus, the 387-residue chain is MRPIYLDNNATTRVDAEVLQAMLPFFADVFGNASSMHDAGATAGAAINVARRQLQALIGAKFDPEITFTSGGTESNNAAILSGLEAMPERTEIVTSAVEHPAVLTLCTHLEKTRGTKVHKVPVDHQGRLDLDAYQDALTHRVAIVSIMWANNETGTIFPVVKLAEMAKKVGAIFHTDAVQAIGKLPIDLKSTAIDMLSLSAHKFHGPKGVGALYIKRGVPFHALIKGGHQERDRRAGTENTPGIVGLGKAAELALDCMDKDNAIIRSFRDRLEKGLLERVPQVFVMGDPVTRLPNTTSIAFEGVGGEAMQFLLNRHGIACSSGSACTSRSLSTSHVLKAMGTPHRQAVGAVRFSLSGYNCEEDIDRVLRVIPAVVKKLRESRPVFAG.

Residues 72-73 (GT), Asn-152, Gln-180, and 200-202 (SAH) each bind pyridoxal 5'-phosphate. Lys-203 bears the N6-(pyridoxal phosphate)lysine mark. Thr-238 lines the pyridoxal 5'-phosphate pocket. Cys-326 acts as the Cysteine persulfide intermediate in catalysis. Cys-326 contributes to the [2Fe-2S] cluster binding site.

The protein belongs to the class-V pyridoxal-phosphate-dependent aminotransferase family. NifS/IscS subfamily. In terms of assembly, homodimer. Pyridoxal 5'-phosphate is required as a cofactor.

It carries out the reaction (sulfur carrier)-H + L-cysteine = (sulfur carrier)-SH + L-alanine. Catalyzes the removal of elemental sulfur atoms from cysteine to produce alanine. Seems to participate in the biosynthesis of the nitrogenase metalloclusters by providing the inorganic sulfur required for the Fe-S core formation. The sequence is that of Cysteine desulfurase from Sinorhizobium fredii (strain NBRC 101917 / NGR234).